The sequence spans 202 residues: Small ribosomal subunit protein uS3 (202 aa).

The 70-residue stretch at 18–87 (LNEYLQRQLV…NPQIDVVEVP (70 aa)) folds into the KH type-2 domain.

This sequence belongs to the universal ribosomal protein uS3 family. Part of the 30S ribosomal subunit.

Binds the lower part of the 30S subunit head. The polypeptide is Small ribosomal subunit protein uS3 (Thermofilum pendens (strain DSM 2475 / Hrk 5)).